A 198-amino-acid polypeptide reads, in one-letter code: Protein uvp1 (198 aa).

Residues 1–140 (MIIGYARKST…SGLAAARARG (140 aa)) form the Resolvase/invertase-type recombinase catalytic domain. The active-site O-(5'-phospho-DNA)-serine intermediate is the Ser9. Residues 168 to 187 (VGAVAKRFNVSRMTIYRYTT) constitute a DNA-binding region (H-T-H motif).

The protein belongs to the site-specific recombinase resolvase family.

Its function is as follows. Cooperates with the mucAB genes in the DNA repair process. Could be a resolvase-invertase protein. In Escherichia coli, this protein is Protein uvp1 (uvp1).